The following is a 709-amino-acid chain: MIKNLVVIESPNKVKTLKQYLPSDEFEIVSTVGHIREMVYKNFGFDENTYTPIWEDWTKNKQKNPKQKHLLSKFEIIKSIKAKASDAQNIFLASDPDREGEAISWHVYDLLDQKDKAKCKRITFNEITKKAVVDALKQPRNIDLNWVESQFARQILDRMIGFRLSRLLNSYLQAKSAGRVQSVALRFLEEREKEIAKFVPRFWWTVDVLLNKENNQKVVCANKSIPLVLREINPELSASLKLDFEAAENVSGIDFLNEASATRFANQLTGEYEVYFIDEPKIYYSSPNPVYTTASLQKDAINKLGWSSKKVTMVAQRLYEGISVNGKQTALISYPRTDSIRISNQFQSECEKYIEKEFGSHYLADKNKLKRHKKDEKIIQDAHEGIHPTYITITPNDLKNGVKRDEFLLYRLIWIRTVASLMADAKTSRTIVRFINQKNKFYTSSKSLLFDGYQRLYEEIKPNTKDELYIDLSKLKIGDKFSFEKISVNEHKTNPPPRYTQASLIEELEKSNIGRPSTYNTMASVNLERGYANLVNRFFYITELGEKVNNELSKHFGNVINKEFTKKMEKSLDEIAENKVNYQEFLKQFWTNFKSDVKLAENSIQKVKKEKELVERDCPKCNQPLVYRYTKRGNEKFVGCSDFPKCKYSEFSNPKPKLTLETLDELCPECNNKLVKRRTKFNAKKTFIGCSNFPNCRFIKKDNAAEFKQ.

The 125-residue stretch at 3 to 127 (KNLVVIESPN…KCKRITFNEI (125 aa)) folds into the Toprim domain. 2 residues coordinate Mg(2+): E9 and D95. The Topo IA-type catalytic domain maps to 143-598 (DLNWVESQFA…FWTNFKSDVK (456 aa)). The interaction with DNA stretch occupies residues 176-181 (SAGRVQ). Y334 (O-(5'-phospho-DNA)-tyrosine intermediate) is an active-site residue. C4-type zinc fingers lie at residues 618–646 (CPKCNQPLVYRYTKRGNEKFVGCSDFPKC) and 667–696 (CPECNNKLVKRRTKFNAKKTFIGCSNFPNC).

It belongs to the type IA topoisomerase family. Monomer. The cofactor is Mg(2+).

The catalysed reaction is ATP-independent breakage of single-stranded DNA, followed by passage and rejoining.. Its function is as follows. Releases the supercoiling and torsional tension of DNA, which is introduced during the DNA replication and transcription, by transiently cleaving and rejoining one strand of the DNA duplex. Introduces a single-strand break via transesterification at a target site in duplex DNA. The scissile phosphodiester is attacked by the catalytic tyrosine of the enzyme, resulting in the formation of a DNA-(5'-phosphotyrosyl)-enzyme intermediate and the expulsion of a 3'-OH DNA strand. The free DNA strand then undergoes passage around the unbroken strand, thus removing DNA supercoils. Finally, in the religation step, the DNA 3'-OH attacks the covalent intermediate to expel the active-site tyrosine and restore the DNA phosphodiester backbone. The chain is DNA topoisomerase 1 from Mycoplasma genitalium (strain ATCC 33530 / DSM 19775 / NCTC 10195 / G37) (Mycoplasmoides genitalium).